Consider the following 142-residue polypeptide: Small ribosomal subunit protein bS16 (142 aa).

The tract at residues 88–142 (GAEGTLRQPEGKTPFVAPDNGSVIIPEAITPKAEKAEEAPAEDAAPAEDDAEKAE) is disordered. A compositionally biased stretch (acidic residues) spans 126 to 142 (APAEDAAPAEDDAEKAE).

It belongs to the bacterial ribosomal protein bS16 family.

The sequence is that of Small ribosomal subunit protein bS16 from Kocuria rhizophila (strain ATCC 9341 / DSM 348 / NBRC 103217 / DC2201).